A 358-amino-acid chain; its full sequence is Probable undecaprenyl-phosphate N-acetylglucosaminyl 1-phosphate transferase (358 aa).

Transmembrane regions (helical) follow at residues 10–32 (VVAF…RIAI), 53–72 (MGGL…SGIY), 76–93 (RMTA…LGIL), 105–127 (FLIQ…FFSV), 137–157 (GWMA…AINL), 164–181 (LAAG…VMAL), 186–205 (VLIL…FLFY), 218–235 (GSLF…LGLY), 240–262 (LFSI…FAII), 292–311 (MSVL…AIVL), and 316–338 (IWLS…EVTG).

The protein belongs to the glycosyltransferase 4 family. It depends on Mg(2+) as a cofactor. Mn(2+) is required as a cofactor.

The protein resides in the cell membrane. It carries out the reaction di-trans,octa-cis-undecaprenyl phosphate + UDP-N-acetyl-alpha-D-glucosamine = N-acetyl-alpha-D-glucosaminyl-di-trans,octa-cis-undecaprenyl diphosphate + UMP. Its pathway is cell wall biogenesis; poly(glucopyranosyl N-acetylgalactosamine 1-phosphate) teichoic acid biosynthesis. The protein operates within cell wall biogenesis; poly(glycerol phosphate) teichoic acid biosynthesis. In terms of biological role, catalyzes the formation of undecaprenyl-PP-N-acetylglucosamine. Involved in the synthesis of anionic cell-wall polymers as it mediates the initiation of the linkage unit formation that appears to be common to the two types of teichoic acids attached to the peptidoglycan of B.subtilis; may also be involved in teichuronic acid biosynthesis. This chain is Probable undecaprenyl-phosphate N-acetylglucosaminyl 1-phosphate transferase (tagO), found in Bacillus subtilis (strain 168).